The following is a 179-amino-acid chain: Inner membrane-spanning protein YciB (179 aa).

5 helical membrane passes run 11–31 (ILFF…TLII), 52–69 (LIMG…AYFN), 71–91 (LEFL…ILLV), 121–141 (LGWA…SQYL), and 149–169 (FKTF…GVYI).

The protein belongs to the YciB family.

The protein resides in the cell inner membrane. Plays a role in cell envelope biogenesis, maintenance of cell envelope integrity and membrane homeostasis. The polypeptide is Inner membrane-spanning protein YciB (Histophilus somni (strain 129Pt) (Haemophilus somnus)).